We begin with the raw amino-acid sequence, 527 residues long: DNA polymerase epsilon subunit 2 (527 aa).

It belongs to the DNA polymerase epsilon subunit B family. In terms of assembly, component of the DNA polymerase epsilon complex consisting of four subunits: the catalytic subunit POLE and the accessory subunits POLE2, POLE3 and POLE4.

The protein localises to the nucleus. Accessory component of the DNA polymerase epsilon complex. Participates in DNA repair and in chromosomal DNA replication. This is DNA polymerase epsilon subunit 2 (Pole2) from Mus musculus (Mouse).